Reading from the N-terminus, the 313-residue chain is Ribosomal RNA small subunit methyltransferase H (313 aa).

S-adenosyl-L-methionine contacts are provided by residues Gly35–His37, Asp55, Phe79, Asp101, and Gln108.

This sequence belongs to the methyltransferase superfamily. RsmH family.

The protein resides in the cytoplasm. It catalyses the reaction cytidine(1402) in 16S rRNA + S-adenosyl-L-methionine = N(4)-methylcytidine(1402) in 16S rRNA + S-adenosyl-L-homocysteine + H(+). Functionally, specifically methylates the N4 position of cytidine in position 1402 (C1402) of 16S rRNA. In Klebsiella pneumoniae subsp. pneumoniae (strain ATCC 700721 / MGH 78578), this protein is Ribosomal RNA small subunit methyltransferase H.